Reading from the N-terminus, the 355-residue chain is Cyclin-D1-binding protein 1 (355 aa).

Alanine 2 carries the post-translational modification N-acetylalanine. Interaction with TCF3 regions lie at residues 2-181 (ASST…VDLV) and 147-355 (ISCN…AVEL). The interval 2 to 187 (ASSTTPVSFL…VDLVKDAHEE (186 aa)) is interaction with RPLP0. Residues 2-205 (ASSTTPVSFL…DPYCGLLDDS (204 aa)) are required for interaction with CCND1. Residues 203-224 (DDSEDNSDSHHNEDGVGLPSNR) are disordered. The interval 235-355 (LITPCLALVR…KELTQRAVEL (121 aa)) is interaction with RPLP0.

Belongs to the CCNDBP1 family. Interacts with CCND1 and GRAP2. May also interact with COPS5, RPLP0, SIRT6, SYF2 and TCF3. In terms of processing, phosphorylated.

The protein localises to the cytoplasm. The protein resides in the nucleus. In terms of biological role, may negatively regulate cell cycle progression. May act at least in part via inhibition of the cyclin-D1/CDK4 complex, thereby preventing phosphorylation of RB1 and blocking E2F-dependent transcription. In Rattus norvegicus (Rat), this protein is Cyclin-D1-binding protein 1 (Ccndbp1).